Reading from the N-terminus, the 776-residue chain is Protein FAM83C (776 aa).

The tract at residues 1-340 (MQGCQAGASI…LYAESQPVEG (340 aa)) is DUF1669. 5 disordered regions span residues 344 to 467 (NEDP…STSP), 494 to 565 (SRLP…SLQH), 617 to 653 (HGQL…DDRR), 669 to 694 (PFRS…VGSA), and 716 to 745 (QGAR…LFAP). The span at 368 to 385 (SATGSSPSSNSLSSIKHS) shows a compositional bias: low complexity. The segment covering 452–467 (PWSQSSPALNHSSTSP) has biased composition (polar residues). Over residues 523–539 (VEEKKVSLSQSHDHLDR) the composition is skewed to basic and acidic residues. Polar residues predominate over residues 554–563 (SRVTPDSSSL).

It belongs to the FAM83 family. Directly interacts (via DUF1669) with CSNK1A1 and CSNK1A1L. May interact with RAF1. Phosphorylated by CSNK1A1.

It localises to the cytoplasm. Functionally, may play a role in MAPK signaling. The sequence is that of Protein FAM83C from Mus musculus (Mouse).